Here is a 163-residue protein sequence, read N- to C-terminus: 2-C-methyl-D-erythritol 2,4-cyclodiphosphate synthase (163 aa).

A divalent metal cation-binding residues include aspartate 11 and histidine 13. 4-CDP-2-C-methyl-D-erythritol 2-phosphate is bound by residues 11–13 (DIH) and 37–38 (HS). Histidine 45 is a binding site for a divalent metal cation. Residues 59 to 61 (DIG), 64 to 68 (FSDTD), 103 to 109 (AQVPKMA), and arginine 145 contribute to the 4-CDP-2-C-methyl-D-erythritol 2-phosphate site.

The protein belongs to the IspF family. Homotrimer. It depends on a divalent metal cation as a cofactor.

It catalyses the reaction 4-CDP-2-C-methyl-D-erythritol 2-phosphate = 2-C-methyl-D-erythritol 2,4-cyclic diphosphate + CMP. Its pathway is isoprenoid biosynthesis; isopentenyl diphosphate biosynthesis via DXP pathway; isopentenyl diphosphate from 1-deoxy-D-xylulose 5-phosphate: step 4/6. Its function is as follows. Involved in the biosynthesis of isopentenyl diphosphate (IPP) and dimethylallyl diphosphate (DMAPP), two major building blocks of isoprenoid compounds. Catalyzes the conversion of 4-diphosphocytidyl-2-C-methyl-D-erythritol 2-phosphate (CDP-ME2P) to 2-C-methyl-D-erythritol 2,4-cyclodiphosphate (ME-CPP) with a corresponding release of cytidine 5-monophosphate (CMP). In Nitrosomonas europaea (strain ATCC 19718 / CIP 103999 / KCTC 2705 / NBRC 14298), this protein is 2-C-methyl-D-erythritol 2,4-cyclodiphosphate synthase.